Consider the following 194-residue polypeptide: dITP/XTP pyrophosphatase (194 aa).

7–12 lines the substrate pocket; sequence SGNVNK. Residues Glu38 and Asp67 each coordinate Mg(2+). The Proton acceptor role is filled by Asp67. Residues Ser68, 151–154, Lys174, and 179–180 each bind substrate; these read FGYD and HR.

Belongs to the HAM1 NTPase family. In terms of assembly, homodimer. It depends on Mg(2+) as a cofactor.

The catalysed reaction is XTP + H2O = XMP + diphosphate + H(+). It catalyses the reaction dITP + H2O = dIMP + diphosphate + H(+). The enzyme catalyses ITP + H2O = IMP + diphosphate + H(+). Pyrophosphatase that catalyzes the hydrolysis of nucleoside triphosphates to their monophosphate derivatives, with a high preference for the non-canonical purine nucleotides XTP (xanthosine triphosphate), dITP (deoxyinosine triphosphate) and ITP. Seems to function as a house-cleaning enzyme that removes non-canonical purine nucleotides from the nucleotide pool, thus preventing their incorporation into DNA/RNA and avoiding chromosomal lesions. This is dITP/XTP pyrophosphatase from Treponema denticola (strain ATCC 35405 / DSM 14222 / CIP 103919 / JCM 8153 / KCTC 15104).